The chain runs to 387 residues: LL-diaminopimelate aminotransferase (387 aa).

2 residues coordinate substrate: Tyr-14 and Gly-39. Pyridoxal 5'-phosphate contacts are provided by residues Tyr-68, 102-103 (SK), Tyr-127, Asn-177, Tyr-208, and 236-238 (SLS). 3 residues coordinate substrate: Lys-103, Tyr-127, and Asn-177. The residue at position 239 (Lys-239) is an N6-(pyridoxal phosphate)lysine. A pyridoxal 5'-phosphate-binding site is contributed by Arg-247. Arg-365 is a substrate binding site.

Belongs to the class-I pyridoxal-phosphate-dependent aminotransferase family. LL-diaminopimelate aminotransferase subfamily. In terms of assembly, homodimer. Requires pyridoxal 5'-phosphate as cofactor.

It carries out the reaction (2S,6S)-2,6-diaminopimelate + 2-oxoglutarate = (S)-2,3,4,5-tetrahydrodipicolinate + L-glutamate + H2O + H(+). The protein operates within amino-acid biosynthesis; L-lysine biosynthesis via DAP pathway; LL-2,6-diaminopimelate from (S)-tetrahydrodipicolinate (aminotransferase route): step 1/1. In terms of biological role, involved in the synthesis of meso-diaminopimelate (m-DAP or DL-DAP), required for both lysine and peptidoglycan biosynthesis. Catalyzes the direct conversion of tetrahydrodipicolinate to LL-diaminopimelate. The sequence is that of LL-diaminopimelate aminotransferase from Aquifex aeolicus (strain VF5).